A 207-amino-acid chain; its full sequence is CASP-like protein 1D1 (207 aa).

Topologically, residues 1 to 40 (MATVDGTTAPSSGGKTATVALESGGGRYGGPAPAKCSGAN) are cytoplasmic. Residues 41–61 (LALRALLFAVSLSALVVLVTA) form a helical membrane-spanning segment. Residues 62–89 (KQTVMVPFVIRPPQFILAPVPAKYTHSP) lie on the Extracellular side of the membrane. Residues 90–110 (ALIYLLAALCATCFYSLITAI) traverse the membrane as a helical segment. Topologically, residues 111–124 (SSVRLLSSSACSAK) are cytoplasmic. Residues 125–145 (TLFYLILLDVFYAAVMASATG) traverse the membrane as a helical segment. At 146-176 (TAGAVAWVGLKGNSHTRWNKICNVYGKFCRH) the chain is on the extracellular side. A helical membrane pass occupies residues 177-197 (IGSSTFLALIAAIVLVLLAFL). Over 198-207 (NAYSLYRRSR) the chain is Cytoplasmic.

It belongs to the Casparian strip membrane proteins (CASP) family. Homodimer and heterodimers.

It localises to the cell membrane. The protein is CASP-like protein 1D1 of Oryza sativa subsp. japonica (Rice).